A 515-amino-acid chain; its full sequence is uncharacterized protein (515 aa).

The protein belongs to the AllF family.

This is an uncharacterized protein from Escherichia coli (strain K12).